We begin with the raw amino-acid sequence, 148 residues long: SsrA-binding protein (148 aa).

It belongs to the SmpB family.

It localises to the cytoplasm. Required for rescue of stalled ribosomes mediated by trans-translation. Binds to transfer-messenger RNA (tmRNA), required for stable association of tmRNA with ribosomes. tmRNA and SmpB together mimic tRNA shape, replacing the anticodon stem-loop with SmpB. tmRNA is encoded by the ssrA gene; the 2 termini fold to resemble tRNA(Ala) and it encodes a 'tag peptide', a short internal open reading frame. During trans-translation Ala-aminoacylated tmRNA acts like a tRNA, entering the A-site of stalled ribosomes, displacing the stalled mRNA. The ribosome then switches to translate the ORF on the tmRNA; the nascent peptide is terminated with the 'tag peptide' encoded by the tmRNA and targeted for degradation. The ribosome is freed to recommence translation, which seems to be the essential function of trans-translation. The chain is SsrA-binding protein from Azoarcus sp. (strain BH72).